Consider the following 453-residue polypeptide: Phosphoglucosamine mutase (453 aa).

Residue Ser108 is the Phosphoserine intermediate of the active site. Mg(2+) is bound by residues Ser108, Asp247, Asp249, and Asp251. A Phosphoserine modification is found at Ser108.

This sequence belongs to the phosphohexose mutase family. Mg(2+) serves as cofactor. In terms of processing, activated by phosphorylation.

It catalyses the reaction alpha-D-glucosamine 1-phosphate = D-glucosamine 6-phosphate. Its function is as follows. Catalyzes the conversion of glucosamine-6-phosphate to glucosamine-1-phosphate. The protein is Phosphoglucosamine mutase of Methylobacillus flagellatus (strain ATCC 51484 / DSM 6875 / VKM B-1610 / KT).